The primary structure comprises 790 residues: N-methylputrescine oxidase 1, peroxisomal (790 aa).

Residues 1-23 form a disordered region; that stretch reads MATTKQKVTAPSPSPSSSTASCC. The segment covering 9–23 has biased composition (low complexity); sequence TAPSPSPSSSTASCC. Substrate is bound at residue 423–434; it reads AFDAGEDGLGKN. Asp-425 serves as the catalytic Proton acceptor. Cysteines 444 and 470 form a disulfide. 506-511 is a binding site for substrate; sequence VANYEY. The active-site Schiff-base intermediate with substrate; via topaquinone is Tyr-509. Tyr-509 carries the 2',4',5'-topaquinone modification. Residues His-559 and His-561 each contribute to the Cu cation site. Positions 714 and 715 each coordinate Mn(2+). His-725 provides a ligand contact to Cu cation.

Belongs to the copper/topaquinone oxidase family. As to quaternary structure, homodimer. Requires Cu cation as cofactor. The cofactor is Zn(2+). It depends on L-topaquinone as a cofactor. In terms of processing, topaquinone (TPQ) is generated by copper-dependent autoxidation of a specific tyrosyl residue. In terms of tissue distribution, mainly expressed in roots, and, to a lower extent, in stems.

It localises to the peroxisome. The enzyme catalyses a primary methyl amine + O2 + H2O = an aldehyde + H2O2 + NH4(+). It carries out the reaction N-methylputrescine + O2 + H2O = 4-methylaminobutanal + H2O2 + NH4(+). Its pathway is alkaloid biosynthesis; nicotine biosynthesis. Its function is as follows. Involved in the biosynthesis of pyridine alkaloid natural products, leading mainly to the production of anabasine, anatabine, nicotine and nornicotine, effective deterrents against herbivores with antiparasitic and pesticide properties (neurotoxins); nornicotine serves as the precursor in the synthesis of the carcinogen compound N'-nitrosonornicotine (NNN). Amine oxidase which mediates the deamination of N-methylputrescine to produce 4-methylaminobutanal. Oxidizes preferentially N-methylated amines. This chain is N-methylputrescine oxidase 1, peroxisomal, found in Nicotiana tabacum (Common tobacco).